We begin with the raw amino-acid sequence, 444 residues long: Phosphoribosylamine--glycine ligase (444 aa).

The 216-residue stretch at 109-324 (RNLFKKYEID…FLDVCFAIAE (216 aa)) folds into the ATP-grasp domain. An ATP-binding site is contributed by 140–202 (MTSLGKDVVV…EEKLVGVEFT (63 aa)). The Mg(2+) site is built by glutamine 282, glutamate 294, and asparagine 296. 3 residues coordinate Mn(2+): glutamine 282, glutamate 294, and asparagine 296.

This sequence belongs to the GARS family. The cofactor is Mg(2+). Requires Mn(2+) as cofactor.

The enzyme catalyses 5-phospho-beta-D-ribosylamine + glycine + ATP = N(1)-(5-phospho-beta-D-ribosyl)glycinamide + ADP + phosphate + H(+). Its pathway is purine metabolism; IMP biosynthesis via de novo pathway; N(1)-(5-phospho-D-ribosyl)glycinamide from 5-phospho-alpha-D-ribose 1-diphosphate: step 2/2. In Methanococcus maripaludis (strain DSM 14266 / JCM 13030 / NBRC 101832 / S2 / LL), this protein is Phosphoribosylamine--glycine ligase.